Here is a 424-residue protein sequence, read N- to C-terminus: CinA-like protein (424 aa).

The protein belongs to the CinA family.

The sequence is that of CinA-like protein from Shewanella denitrificans (strain OS217 / ATCC BAA-1090 / DSM 15013).